The chain runs to 746 residues: UvrABC system protein C (746 aa).

The 80-residue stretch at 18 to 97 (AKPGVYKWRD…IKEFDPRFNV (80 aa)) folds into the GIY-YIG domain. Positions 211–246 (RPYIAQLTRDMKEASAELEFEKAARLRDQIQMLETV) constitute a UVR domain. Residues 557 to 577 (ANGNDNGEGGSDISGKGHAVP) are disordered.

This sequence belongs to the UvrC family. In terms of assembly, interacts with UvrB in an incision complex.

The protein resides in the cytoplasm. Functionally, the UvrABC repair system catalyzes the recognition and processing of DNA lesions. UvrC both incises the 5' and 3' sides of the lesion. The N-terminal half is responsible for the 3' incision and the C-terminal half is responsible for the 5' incision. The chain is UvrABC system protein C from Bifidobacterium longum (strain DJO10A).